The chain runs to 740 residues: Cell death abnormality protein 12 (740 aa).

The 147-residue stretch at 348–494 (SEIQKVLDID…FVLEQLRHVL (147 aa)) folds into the ELMO domain. The tract at residues 555-690 (INHLNYLKKG…ESLAYLVGNT (136 aa)) is required for punctate localization, cell corpse engulfment and distal cell tip migration. Positions 724–727 (PDVP) match the SH3-binding motif.

In terms of assembly, interacts with psr-1. Forms a ternary complex with ced-2 and ced-5.

The protein localises to the cytoplasm. Its function is as follows. Involved in apoptosis and necrosis. Required for the cell corpse engulfment process. Has roles in the formation of actin halos and distal tip cell migration. Plays no role in amphid axon outgrowth. This chain is Cell death abnormality protein 12, found in Caenorhabditis briggsae.